The primary structure comprises 553 residues: Glucose-6-phosphate isomerase (553 aa).

D-glucose 6-phosphate contacts are provided by residues 164 to 165, 215 to 220, Gln-359, Glu-363, His-394, and Lys-516; these read GS and SKTFTT. Residue Glu-363 is the Proton donor of the active site. Active-site residues include His-394 and Lys-516.

It belongs to the GPI family. In terms of assembly, homodimer.

The protein localises to the cytoplasm. It is found in the cytosol. The enzyme catalyses alpha-D-glucose 6-phosphate = beta-D-fructose 6-phosphate. It participates in carbohydrate degradation; glycolysis; D-glyceraldehyde 3-phosphate and glycerone phosphate from D-glucose: step 2/4. In the cytoplasm, catalyzes the conversion of glucose-6-phosphate to fructose-6-phosphate, the second step in glycolysis, and the reverse reaction during gluconeogenesis. This chain is Glucose-6-phosphate isomerase (pgiA), found in Aspergillus oryzae (strain ATCC 42149 / RIB 40) (Yellow koji mold).